A 342-amino-acid polypeptide reads, in one-letter code: Antihemorrhagic factor cHLP-B (342 aa).

Residues 1-19 (MNSLVALVLLGQMIGSTLS) form the signal peptide. 2 consecutive Cystatin fetuin-A-type domains span residues 20-129 (HHLQ…AKCH) and 140-253 (RNCP…SDCV). Intrachain disulfides connect Cys-28-Cys-333, Cys-85-Cys-96, Cys-110-Cys-128, Cys-142-Cys-145, Cys-204-Cys-216, and Cys-229-Cys-252. Asn-95 carries N-linked (GlcNAc...) asparagine glycosylation. Asn-203 is a glycosylation site (N-linked (GlcNAc...) asparagine). Asn-281 and Asn-292 each carry an N-linked (GlcNAc...) asparagine glycan.

It belongs to the fetuin family. In terms of assembly, homodimer. In terms of tissue distribution, expressed by the liver.

Its subcellular location is the secreted. Its function is as follows. Potent inhibitor of hemorrhagic activity but also proteolytic activities. Inhibition occurs by formation of a non-covalent complex between this protein and the proteinases at their metalloproteinase domains. In Gloydius brevicauda (Korean slamosa snake), this protein is Antihemorrhagic factor cHLP-B.